The chain runs to 437 residues: Eukaryotic peptide chain release factor subunit 1 (437 aa).

The NIKS motif; plays an important role in translational termination motif lies at 61–64; that stretch reads NIKS.

It belongs to the eukaryotic release factor 1 family. In terms of assembly, component of the eRF1-eRF3-GTP ternary complex, composed of ETF1/ERF1 and eRF3 (GSPT1/ERF3A or GSPT2/ERF3B) and GTP.

It is found in the cytoplasm. In terms of biological role, component of the eRF1-eRF3-GTP ternary complex, a ternary complex that mediates translation termination in response to the termination codons. The eRF1-eRF3-GTP complex binds to a stop codon in the ribosomal A-site. ETF1/ERF1 is responsible for stop codon recognition and inducing hydrolysis of peptidyl-tRNA. Following GTP hydrolysis, eRF3 (GSPT1/ERF3A or GSPT2/ERF3B) dissociates, permitting ETF1/eRF1 to accommodate fully in the A-site, followed by hydrolysis of peptidyl-tRNA. This chain is Eukaryotic peptide chain release factor subunit 1 (etf1), found in Xenopus tropicalis (Western clawed frog).